The primary structure comprises 419 residues: Probable glycosidase C21B10.07 (419 aa).

2 disordered regions span residues 1 to 20 (MGIPDSTTDSRHSLSSAALS) and 29 to 67 (DPARKNESTNDVIDNHTDTEIDDHDNDHENLDSNNNNEN). A compositionally biased stretch (basic and acidic residues) spans 30–59 (PARKNESTNDVIDNHTDTEIDDHDNDHENL). The chain crosses the membrane as a helical span at residues 88 to 108 (FIWILIFIVALICSVLIGVLG). In terms of domain architecture, GH16 spans 122–387 (PSYKAKTYSL…WAGSSVYSSA (266 aa)). E237 functions as the Nucleophile in the catalytic mechanism. The active-site Proton donor is the E242.

Belongs to the glycosyl hydrolase 16 family.

The protein localises to the membrane. The chain is Probable glycosidase C21B10.07 from Schizosaccharomyces pombe (strain 972 / ATCC 24843) (Fission yeast).